An 83-amino-acid chain; its full sequence is Hepcidin (83 aa).

Positions 1-23 (MALSTRTQAACLLLLLLASLSST) are cleaved as a signal peptide. The propeptide occupies 24–53 (TYLHQQMRQTTELQPLHGEESRADIAIPMQ). 4 disulfides stabilise this stretch: cysteine 65-cysteine 81, cysteine 68-cysteine 71, cysteine 69-cysteine 77, and cysteine 72-cysteine 80.

This sequence belongs to the hepcidin family. As to quaternary structure, interacts with SLC40A1; this interaction promotes SLC40A1 rapid ubiquitination. As to expression, highly expressed in the liver and to a much lesser extent in the heart. Secreted in blood.

It is found in the secreted. In terms of biological role, liver-produced hormone that constitutes the main circulating regulator of iron absorption and distribution across tissues. Acts by promoting endocytosis and degradation of SLC40A1, leading to the retention of iron in iron-exporting cells and decreased flow of iron into plasma. Controls the major flows of iron into plasma: absorption of dietary iron in the intestine, recycling of iron by macrophages, which phagocytose old erythrocytes and other cells, and mobilization of stored iron from hepatocytes. The chain is Hepcidin (Hamp) from Mus musculus (Mouse).